The following is a 497-amino-acid chain: Cytochrome P450 3A18 (497 aa).

C442 is a binding site for heme.

This sequence belongs to the cytochrome P450 family. Requires heme as cofactor.

It localises to the endoplasmic reticulum membrane. The protein localises to the microsome membrane. The catalysed reaction is an organic molecule + reduced [NADPH--hemoprotein reductase] + O2 = an alcohol + oxidized [NADPH--hemoprotein reductase] + H2O + H(+). Catalyzes 16-beta- and 6-alpha-hydroxylations of testosterone. This chain is Cytochrome P450 3A18 (Cyp3a18), found in Rattus norvegicus (Rat).